Here is a 273-residue protein sequence, read N- to C-terminus: Putative phosphoenolpyruvate synthase regulatory protein (273 aa).

153-160 (AVSRAGKT) serves as a coordination point for ADP.

Belongs to the pyruvate, phosphate/water dikinase regulatory protein family. PSRP subfamily.

It carries out the reaction [pyruvate, water dikinase] + ADP = [pyruvate, water dikinase]-phosphate + AMP + H(+). It catalyses the reaction [pyruvate, water dikinase]-phosphate + phosphate + H(+) = [pyruvate, water dikinase] + diphosphate. Functionally, bifunctional serine/threonine kinase and phosphorylase involved in the regulation of the phosphoenolpyruvate synthase (PEPS) by catalyzing its phosphorylation/dephosphorylation. The polypeptide is Putative phosphoenolpyruvate synthase regulatory protein (Xylella fastidiosa (strain 9a5c)).